Here is a 208-residue protein sequence, read N- to C-terminus: Small ribosomal subunit protein uS4 (208 aa).

The 64-residue stretch at threonine 97–leucine 160 folds into the S4 RNA-binding domain.

Belongs to the universal ribosomal protein uS4 family. In terms of assembly, part of the 30S ribosomal subunit. Contacts protein S5. The interaction surface between S4 and S5 is involved in control of translational fidelity.

In terms of biological role, one of the primary rRNA binding proteins, it binds directly to 16S rRNA where it nucleates assembly of the body of the 30S subunit. Functionally, with S5 and S12 plays an important role in translational accuracy. This chain is Small ribosomal subunit protein uS4, found in Xanthomonas axonopodis pv. citri (strain 306).